Reading from the N-terminus, the 838-residue chain is V-type proton ATPase 116 kDa subunit a 1 (838 aa).

Residues 1-388 (MGELFRSEEM…DAYGIGTYRE (388 aa)) are Cytoplasmic-facing. Phosphothreonine occurs at positions 250 and 360. A Phosphotyrosine modification is found at Y364. A helical membrane pass occupies residues 389–407 (INPAPYTIITFPFLFAVMF). The Vacuolar portion of the chain corresponds to 408–409 (GD). A helical membrane pass occupies residues 410 to 426 (LGHGILMTLFAVWMVLK). Over 427-441 (ESRILSQKNENEMFS) the chain is Cytoplasmic. A helical transmembrane segment spans residues 442-471 (TIFSGRYIILLMGVFSIYTGLIYNDCFSKS). Residues 472–535 (LNIFGSSWSV…ATNKLTFLNS (64 aa)) lie on the Vacuolar side of the membrane. The chain crosses the membrane as a helical span at residues 536–555 (FKMKMSVILGIIHMLFGVSL). The Cytoplasmic portion of the chain corresponds to 556-573 (SLFNHTYFKKPLNIYFGF). The chain crosses the membrane as a helical span at residues 574–594 (IPEIIFMTSLFGYLVILIFYK). Residues 595 to 639 (WTAYNAKTSEKAPSLLIHFINMFLFSYGDSGNSMLYSGQKGIQCF) are Vacuolar-facing. Residues 640–659 (LVVVALLCVPWMLLFKPLVL) form a helical membrane-spanning segment. The Cytoplasmic portion of the chain corresponds to 660–725 (RRQYLRRKHL…DTMVHQAIHT (66 aa)). Residues 726-750 (IEYCLGCISNTASYLRLWALSLAHA) traverse the membrane as a helical segment. Topologically, residues 751–771 (QLSEVLWTMVIHIGLKVKSLA) are vacuolar. Residues 772 to 810 (GGLALFFIFAAFATLTVAILLIMEGLSAFLHALRLHWVE) form a helical membrane-spanning segment. Residues 811–838 (FQNKFYSGTGFKFLPFSFEHIREGKFDD) lie on the Cytoplasmic side of the membrane.

Belongs to the V-ATPase 116 kDa subunit family. As to quaternary structure, V-ATPase is a heteromultimeric enzyme made up of two complexes: the ATP-hydrolytic V1 complex and the proton translocation V0 complex. The V1 complex consists of three catalytic AB heterodimers that form a heterohexamer, three peripheral stalks each consisting of EG heterodimers, one central rotor including subunits D and F, and the regulatory subunits C and H. The proton translocation complex V0 consists of the proton transport subunit a, a ring of proteolipid subunits c9c'', rotary subunit d, subunits e and f, and the accessory subunits ATP6AP1/Ac45 and ATP6AP2/PRR. Interacts with SPAAR. In terms of tissue distribution, expressed in brain (at protein level). Expressed heart, kidney, liver, spleen, and to a lesser extent in brain.

It localises to the cytoplasmic vesicle. The protein resides in the clathrin-coated vesicle membrane. Its subcellular location is the secretory vesicle. The protein localises to the synaptic vesicle membrane. It is found in the melanosome. Its function is as follows. Subunit of the V0 complex of vacuolar(H+)-ATPase (V-ATPase), a multisubunit enzyme composed of a peripheral complex (V1) that hydrolyzes ATP and a membrane integral complex (V0) that translocates protons. V-ATPase is responsible for the acidification of various organelles, such as lysosomes, endosomes, the trans-Golgi network, and secretory granules, including synaptic vesicles. In certain cell types, can be exported to the plasma membrane, where it is involved in the acidification of the extracellular environment. Required for assembly and activity of the vacuolar ATPase. Through its action on compartment acidification, plays an essential role in neuronal development in terms of integrity and connectivity of neurons. The protein is V-type proton ATPase 116 kDa subunit a 1 (ATP6V0A1) of Bos taurus (Bovine).